Here is a 500-residue protein sequence, read N- to C-terminus: LEM protein 2 (500 aa).

The region spanning 1–45 is the LEM domain; sequence MVDVEKMSDAELRAELNVRGANVGPVTGTTRSLYEKKLKKLLSGG. Over 1 to 325 the chain is Nuclear; sequence MVDVEKMSDA…VKQTNIFNEA (325 aa). The interval 39-202 is disordered; the sequence is KKLLSGGAKT…RRITSVPGLI (164 aa). The segment covering 46–57 has biased composition (low complexity); the sequence is AKTPARPTVAKP. The span at 58-75 shows a compositional bias: pro residues; it reads APKPTPKSAPAPKSPKSP. The span at 77–89 shows a compositional bias: low complexity; sequence ARRSIPRAAATAA. Residues 103-122 are compositionally biased toward acidic residues; that stretch reads EEMSDSDDDMRDDDDDDEEI. 2 stretches are compositionally biased toward low complexity: residues 130–141 and 168–197; these read SSFRSANSTASS and NTPR…RITS. The helical transmembrane segment at 326-346 threads the bilayer; sequence IYFALYVILILFVVLGIAYAL. Over 347–378 the chain is Perinuclear space; that stretch reads TTTHRPKTADFSGYWGVLKAAGRDSLNFFYNY. A helical transmembrane segment spans residues 379–399; it reads AILPVVSLGIFVVLGAGIYFG. Topologically, residues 400–500 are nuclear; that stretch reads HRKYKEAKEQ…WIGNQSQKRW (101 aa).

Interacts with lmn-1. Interacts (via LEM domain and the C-terminal nuclear domain) with baf-1. In terms of tissue distribution, ubiquitous. High expression in germline and intestine.

It is found in the nucleus inner membrane. Its subcellular location is the nucleus envelope. The protein localises to the chromosome. In terms of biological role, nuclear lamina-associated inner nuclear membrane protein that is involved in cell division, nuclear structure organization, maintenance of nuclear envelope integrity and nuclear envelope reformation after mitosis. In interphase cells, plays a role in anchoring and spatial arrangement of chromosome arms at the nuclear periphery, forming so-called lem-2 subdomains. Both arms of autosomes but only the left arm of the X chromosome are anchored in lem-2 subdomains; sequences bound by lem-2 are mainly repetitive chromosome sequences and inactive genes. Involved in chromosome segregation and cell division, probably via its interaction with the nuclear intermediate filament protein lmn-1, the main component of nuclear lamina. Required to organize the distribution of lmn-1, nuclear pore complexes (NPCs) and chromatin in mitotically active cells. Involved in the nuclear positioning and efficient anchoring of microtubule-organizing centers (MTOCs) to the nuclear envelope during mitosis as well as on maintaining correct nuclear morphology. Contributes to closure of nuclear envelope (NE) holes and prevents excess nuclear membranes after meiosis and mitosis. Together with emr-1, plays a role in baf-1 enrichment at the nuclear envelope in anaphase. Together with emr-1, involved in muscle cell attachment to hypodermal cells, as well as muscle cell location and sarcomere organization. May play a role in radiation-induced DNA damage repair response. This is LEM protein 2 (lem-2) from Caenorhabditis elegans.